A 772-amino-acid chain; its full sequence is MGRHLLLLLFSILYMLLCQASSSGVFELKLQEFLNKKGVQGNKNCCKGGLTTSYQQCECKTFFRICLKHYQPNASPEPPCTYGGTVTPVLGSNSFQVPDTLPDGSFTNPIRMNFGFTWPGTFSLIIEALHADSKEDLTTENPERIISTMTTQRHLTVGEDWSQDLHSVGRTELKYSYRFVCDEHYYGEGCSVFCRPRDDAFGHFTCGERGEIICDAGWKGQYCTEPICLPGCDEEHGFCEKPGECKCRVGFKGRYCDECIRYPGCLHGTCQQPWQCNCQEGWGGLFCNQDLNYCTHHKPCLNGATCSNTGQGSYTCSCRPGFSGASCEIEVNECTGNPCRNGGSCTDMENTYSCTCPPGFYGKNCELSAMTCADGPCFNGGRCADNPDGGYFCQCPTGYAGFNCEKKIDHCSSSPCSNGARCVDLVNSYLCQCPDGFTGMNCDRAGDECSMYPCQNGGTCQEGASGYMCTCPPGYTGRNCSSPVSRCQHNPCHNGATCHERNNRYVCACVSGYGGRNCQFLLPDRASQIASDVPWTAVGSGVLLVLLLVVACAVVVVCVRSKVQQRRRDREDEVANGENETINNLTNNCHRDKDLAVSVVGVAPVKNINKKIDFSSDHDDLSLTTEKRSYKTRHAPADYNLVHEVKFEVKHEVKLEHAGKETTMANELSDSCEDIKCQSLQDSSECTEEKRRKRLKSDASEKSKYSESRYSESKYSESKYSESKYSDVSLYSESACASACASASTSACVDTKYKSVMVMSEEKDECVIATEV.

The signal sequence occupies residues 1–20 (MGRHLLLLLFSILYMLLCQA). At 21 to 536 (SSSGVFELKL…SQIASDVPWT (516 aa)) the chain is on the extracellular side. The DSL domain maps to 179–223 (FVCDEHYYGEGCSVFCRPRDDAFGHFTCGERGEIICDAGWKGQYC). 26 cysteine pairs are disulfide-bonded: C181–C190, C194–C206, C214–C223, C228–C239, C232–C245, C259–C270, C265–C276, C278–C287, C294–C306, C300–C316, C318–C327, C334–C345, C339–C354, C356–C365, C372–C383, C377–C393, C395–C404, C411–C422, C416–C431, C433–C442, C449–C460, C454–C469, C471–C480, C487–C498, C492–C507, and C509–C518. EGF-like domains follow at residues 225 to 257 (EPIC…RYCD), 257 to 288 (DECI…LFCN), and 290 to 328 (DLNY…ASCE). The EGF-like 4; calcium-binding domain occupies 330–366 (EVNECTGNPCRNGGSCTDMENTYSCTCPPGFYGKNCE). 4 consecutive EGF-like domains span residues 368–405 (SAMT…FNCE), 407–443 (KIDH…MNCD), 445–481 (AGDE…RNCS), and 483–519 (PVSR…RNCQ). A glycan (N-linked (GlcNAc...) asparagine) is linked at N479. A helical transmembrane segment spans residues 537–557 (AVGSGVLLVLLLVVACAVVVV). The Cytoplasmic segment spans residues 558–772 (CVRSKVQQRR…KDECVIATEV (215 aa)). The disordered stretch occupies residues 688–722 (EEKRRKRLKSDASEKSKYSESRYSESKYSESKYSE). Residues 696–722 (KSDASEKSKYSESRYSESKYSESKYSE) are compositionally biased toward basic and acidic residues.

As to quaternary structure, interacts with mib. Ubiquitinated by mib, leading to its endocytosis and subsequent degradation. Ubiquitinated by the ECS(ASB11) complex, leading to its degradation by the proteasome. In terms of tissue distribution, expressed in nervous system. In the developing nervous system, it is expressed in overlapping regions with deltaB (dlb) and deltaD (dld); in the neural plate, dla is expressed in patches of contiguous cells with dld, while dlb is confined to scattered cells within those patches that will differentiate as neurons. In 24 hours embryos, expressed in the hindbrain in stripes adjacent to rhombomere boundaries, but not in the actual boundary cells. During gastrulation and tail formation, expressed in embryonic midline cells. Expressed in hair cells of inner ear.

The protein localises to the membrane. In terms of biological role, acts as a ligand for Notch receptors and is involved in primary neurogenesis. Can activate Notch receptors, thereby playing a key role in lateral inhibition, a process that prevents the immediate neighbors of each nascent neural cell from simultaneously embarking on neural differentiation. Required for boundary formation during segmentation of the hindbrain. Required for midline cell fate specification prior to germ layer formation; regulates specification of floorplate, notochord and hypochord. In inner ear, it prevents adjacent cells from adopting the same cell fate. Plays a role in angiogenesis. The chain is Delta-like protein A (dla) from Danio rerio (Zebrafish).